We begin with the raw amino-acid sequence, 232 residues long: Orotidine 5'-phosphate decarboxylase (232 aa).

Substrate is bound by residues aspartate 13, lysine 35, 62 to 71, threonine 122, arginine 182, glutamine 191, glycine 211, and arginine 212; that span reads DLKFHDIPNT. Lysine 64 functions as the Proton donor in the catalytic mechanism.

This sequence belongs to the OMP decarboxylase family. Type 1 subfamily. Homodimer.

It carries out the reaction orotidine 5'-phosphate + H(+) = UMP + CO2. It participates in pyrimidine metabolism; UMP biosynthesis via de novo pathway; UMP from orotate: step 2/2. Catalyzes the decarboxylation of orotidine 5'-monophosphate (OMP) to uridine 5'-monophosphate (UMP). In Pseudomonas syringae pv. tomato (strain ATCC BAA-871 / DC3000), this protein is Orotidine 5'-phosphate decarboxylase.